A 240-amino-acid polypeptide reads, in one-letter code: MATRNPFDIDHKSKYLREAALEANLSHPETTPTMLTCPIDSGFLKDPVITPEGFVYNKSSILKWLETKKEDPQSRKPLTAKDLQPFPELLIIVNRFVETQTNYEKLKNRLVQNARVAARQKEYTEIPDIFLCPISKTLIKTPVITAQGKVYDQEALSNFLIATGNKDETGKKLSIDDVVVFDELYQQIKVYNFYRKREVQKNQIQPSVSNGFGFFSLNFLTSWLWGTEEKKEKTSSDMTY.

U-box domains lie at 30 to 103 and 125 to 198; these read TTPT…QTNY and EIPD…RKRE.

In terms of processing, ubiquitinated in the presence of host E1 ubiquitin-activating enzyme, E2 ubiquitin-conjugating enzyme and ubiquitin.

Its subcellular location is the secreted. The protein localises to the host cell. The enzyme catalyses S-ubiquitinyl-[E2 ubiquitin-conjugating enzyme]-L-cysteine + [acceptor protein]-L-lysine = [E2 ubiquitin-conjugating enzyme]-L-cysteine + N(6)-ubiquitinyl-[acceptor protein]-L-lysine.. Its function is as follows. Effector proteins function to alter host cell physiology and promote bacterial survival in host tissues. This protein is an E3 ubiquitin ligase that interferes with host's ubiquitination pathway. The sequence is that of E3 ubiquitin-protein ligase LubX (lubX) from Legionella pneumophila (strain Paris).